Here is a 437-residue protein sequence, read N- to C-terminus: AA9 family lytic polysaccharide monooxygenase H (437 aa).

Positions 1-21 (MNLSLFTLALVACYSSQLAAA) are cleaved as a signal peptide. Histidine 22 serves as a coordination point for Cu(2+). Cysteine 64 and cysteine 193 form a disulfide bridge. N-linked (GlcNAc...) asparagine glycosylation is found at asparagine 67 and asparagine 79. Cu(2+) is bound at residue histidine 104. Residues asparagine 120 and asparagine 138 are each glycosylated (N-linked (GlcNAc...) asparagine). O2 contacts are provided by histidine 178 and glutamine 188. Position 190 (tyrosine 190) interacts with Cu(2+). 2 N-linked (GlcNAc...) asparagine glycosylation sites follow: asparagine 252 and asparagine 307. The Chitin-binding type-1 domain occupies 392 to 437 (DGKCGDGNGQTCKGSLLGECCSQVGYCGSSESYCGVGCQGNFGVCG). Cystine bridges form between cysteine 395–cysteine 412, cysteine 403–cysteine 418, cysteine 411–cysteine 425, and cysteine 429–cysteine 436.

It belongs to the polysaccharide monooxygenase AA9 family. Cu(2+) is required as a cofactor.

It is found in the secreted. The enzyme catalyses [(1-&gt;4)-beta-D-glucosyl]n+m + reduced acceptor + O2 = 4-dehydro-beta-D-glucosyl-[(1-&gt;4)-beta-D-glucosyl]n-1 + [(1-&gt;4)-beta-D-glucosyl]m + acceptor + H2O.. Lytic polysaccharide monooxygenase (LPMO) that depolymerizes crystalline and amorphous polysaccharides via the oxidation of scissile alpha- or beta-(1-4)-glycosidic bonds, yielding C1 and C4 oxidation products. Catalysis by LPMOs requires the reduction of the active-site copper from Cu(II) to Cu(I) by a reducing agent and H(2)O(2) or O(2) as a cosubstrate. The sequence is that of AA9 family lytic polysaccharide monooxygenase H from Botryotinia fuckeliana (strain B05.10) (Noble rot fungus).